Consider the following 494-residue polypeptide: Alanine--glyoxylate aminotransferase 2-like (494 aa).

K291 bears the N6-(pyridoxal phosphate)lysine mark.

The protein belongs to the class-III pyridoxal-phosphate-dependent aminotransferase family. The cofactor is pyridoxal 5'-phosphate.

The polypeptide is Alanine--glyoxylate aminotransferase 2-like (Drosophila melanogaster (Fruit fly)).